The following is a 665-amino-acid chain: Methionine--tRNA ligase (665 aa).

A 'HIGH' region motif is present at residues 12-22 (YYPSGKLHIGS). A 'KMSKS' region motif is present at residues 308 to 312 (KMSKS). Lysine 311 is a binding site for ATP. Residues 562 to 665 (TFDAVEIRVA…SSVPNGSIIG (104 aa)) enclose the tRNA-binding domain.

Belongs to the class-I aminoacyl-tRNA synthetase family. MetG type 2B subfamily. As to quaternary structure, homodimer.

The protein resides in the cytoplasm. The enzyme catalyses tRNA(Met) + L-methionine + ATP = L-methionyl-tRNA(Met) + AMP + diphosphate. Functionally, is required not only for elongation of protein synthesis but also for the initiation of all mRNA translation through initiator tRNA(fMet) aminoacylation. This Streptococcus pyogenes serotype M3 (strain SSI-1) protein is Methionine--tRNA ligase (metG).